Consider the following 350-residue polypeptide: Glutamyl-tRNA reductase (350 aa).

Substrate is bound by residues 53 to 56 (TCNR), S105, 110 to 112 (ETQ), and Q116. C54 acts as the Nucleophile in catalysis. 185–190 (GAGETA) lines the NADP(+) pocket.

Belongs to the glutamyl-tRNA reductase family. As to quaternary structure, homodimer.

The catalysed reaction is (S)-4-amino-5-oxopentanoate + tRNA(Glu) + NADP(+) = L-glutamyl-tRNA(Glu) + NADPH + H(+). Its pathway is porphyrin-containing compound metabolism; protoporphyrin-IX biosynthesis; 5-aminolevulinate from L-glutamyl-tRNA(Glu): step 1/2. Its function is as follows. Catalyzes the NADPH-dependent reduction of glutamyl-tRNA(Glu) to glutamate 1-semialdehyde (GSA). This is Glutamyl-tRNA reductase from Deinococcus radiodurans (strain ATCC 13939 / DSM 20539 / JCM 16871 / CCUG 27074 / LMG 4051 / NBRC 15346 / NCIMB 9279 / VKM B-1422 / R1).